The following is a 1101-amino-acid chain: Zinc finger SWIM domain-containing protein 4 (1101 aa).

Residues 1 to 29 form a disordered region; sequence MEPPAAKRSRGCPAGDEPGTGARRSRPEP. An SWIM-type zinc finger spans residues 134–171; the sequence is YHVSISFDRCKITSVSCGCDNRDLFYCAHVVALSLYRI.

This Mus musculus (Mouse) protein is Zinc finger SWIM domain-containing protein 4 (Zswim4).